We begin with the raw amino-acid sequence, 129 residues long: uncharacterized protein (129 aa).

The disordered stretch occupies residues 44–63; it reads PYRAADRSNDQDNDRSGGNV. Over residues 46-58 the composition is skewed to basic and acidic residues; the sequence is RAADRSNDQDNDR. 2 helical membrane-spanning segments follow: residues 78 to 98 and 109 to 129; these read IISL…VGYI and AWAM…IPFF.

It localises to the cell membrane. This is an uncharacterized protein from Bacillus subtilis (strain 168).